A 329-amino-acid polypeptide reads, in one-letter code: Replication factor C small subunit 1 (329 aa).

44–51 (GPPGTGKT) is an ATP binding site.

It belongs to the activator 1 small subunits family. RfcS subfamily. In terms of assembly, heteromultimer composed of small subunits (RfcS) and large subunits (RfcL).

Functionally, part of the RFC clamp loader complex which loads the PCNA sliding clamp onto DNA. This chain is Replication factor C small subunit 1, found in Pyrobaculum arsenaticum (strain DSM 13514 / JCM 11321 / PZ6).